Reading from the N-terminus, the 427-residue chain is MAQKIQAIRGMNDYLPADTRVWQKIENTLKQILAGYGFSEIRTPIVEHTPLFQRAIGEVTDVVEKEMYTFTDRGEDAQSLTLRPENTAGCVRAGIEHGLLYNQEQRLWYLGPMFRYERPQKGRYRQFHQLGAEVFGLQGPDIDAELIMLTARWWKALGIAEHVTLELNSIGSLEARAKYREALVAFLEQHVDQLDEDCKRRMYSNPLRVLDSKNPEIQTLLNDAPELFDYLDDESREHFDGLCALLDAVGITYRVNQRLVRGLDYYNRTVFEWVTSALGSQGTVCAGGRYDGLVKQLGGHPTPAVGFAMGMERMILLVQAVNPEFVADTHVADVYLASFGDNSQSAALMLAEEIRDQLPTLRLMTNHGKGNFKKQLGRADKHGAKIALILGEDEINAGTVAVKDLRSGEQTIVSRSELAQQLTLLLG.

It belongs to the class-II aminoacyl-tRNA synthetase family. As to quaternary structure, homodimer.

The protein resides in the cytoplasm. It carries out the reaction tRNA(His) + L-histidine + ATP = L-histidyl-tRNA(His) + AMP + diphosphate + H(+). This chain is Histidine--tRNA ligase, found in Proteus mirabilis (strain HI4320).